The primary structure comprises 390 residues: Putative transposase y4qE (390 aa).

The protein belongs to the transposase IS1111A/IS1328/IS1533 family.

This is Putative transposase y4qE from Sinorhizobium fredii (strain NBRC 101917 / NGR234).